The chain runs to 197 residues: Imidazoleglycerol-phosphate dehydratase (197 aa).

It belongs to the imidazoleglycerol-phosphate dehydratase family.

The protein localises to the cytoplasm. The enzyme catalyses D-erythro-1-(imidazol-4-yl)glycerol 3-phosphate = 3-(imidazol-4-yl)-2-oxopropyl phosphate + H2O. It participates in amino-acid biosynthesis; L-histidine biosynthesis; L-histidine from 5-phospho-alpha-D-ribose 1-diphosphate: step 6/9. The protein is Imidazoleglycerol-phosphate dehydratase of Pseudomonas fluorescens (strain SBW25).